The primary structure comprises 349 residues: MDIKSALSRIVGQLDLTTEEMREVMRQIMTGQCSEAQIGAFLMGMRMKSESIDEIVGAVSVMRELAEKVELQSLDGVVDIVGTGGDGANIFNVSTASSFVLAAAGCPVAKHGNRAVSGKSGSADLLEAAGIYLNLTPTQVARCIDSLGIGFMFAQSHHSAMKHAAGPRRELGLRTLFNMLGPLTNPAGVKHQVVGVFAQTLCRPLAEVLQRLGSKHVLVVHSKDGLDEFSLAAPTFVAELKNDEITEYWVEPEDLGMKSQSLHGLAVESPQASLELIRDALGRRKTENGQKAAEMIVLNAGAALYAADHAMSLKAGVELAHDVLHTGLAWEKLQELGAFTAVFKVENEA.

Residues G82, 85 to 86 (GD), 92 to 95 (NVST), 110 to 118 (KHGNRAVSG), and S122 each bind 5-phospho-alpha-D-ribose 1-diphosphate. Position 82 (G82) interacts with anthranilate. S94 is a Mg(2+) binding site. N113 serves as a coordination point for anthranilate. R168 provides a ligand contact to anthranilate. Residues D227 and E228 each contribute to the Mg(2+) site.

Belongs to the anthranilate phosphoribosyltransferase family. In terms of assembly, homodimer. Requires Mg(2+) as cofactor.

The enzyme catalyses N-(5-phospho-beta-D-ribosyl)anthranilate + diphosphate = 5-phospho-alpha-D-ribose 1-diphosphate + anthranilate. The protein operates within amino-acid biosynthesis; L-tryptophan biosynthesis; L-tryptophan from chorismate: step 2/5. Its function is as follows. Catalyzes the transfer of the phosphoribosyl group of 5-phosphorylribose-1-pyrophosphate (PRPP) to anthranilate to yield N-(5'-phosphoribosyl)-anthranilate (PRA). The sequence is that of Anthranilate phosphoribosyltransferase from Pseudomonas putida (strain ATCC 47054 / DSM 6125 / CFBP 8728 / NCIMB 11950 / KT2440).